A 160-amino-acid chain; its full sequence is Putative pre-16S rRNA nuclease (160 aa).

Belongs to the YqgF nuclease family.

The protein resides in the cytoplasm. Its function is as follows. Could be a nuclease involved in processing of the 5'-end of pre-16S rRNA. The chain is Putative pre-16S rRNA nuclease from Jannaschia sp. (strain CCS1).